The sequence spans 194 residues: Holliday junction branch migration complex subunit RuvA (194 aa).

The segment at 1-64 (MIARLSGILV…EDAQLLYGFG (64 aa)) is domain I. Residues 65-141 (SDQERATFRQ…FAIDGGTALA (77 aa)) are domain II. A flexible linker region spans residues 141-144 (AGSN). Positions 145 to 194 (PAKSASSDVLNALLALGYNEREALAAVKQLPADIAVAEGIKLSLKSLSKT) are domain III.

Belongs to the RuvA family. In terms of assembly, homotetramer. Forms an RuvA(8)-RuvB(12)-Holliday junction (HJ) complex. HJ DNA is sandwiched between 2 RuvA tetramers; dsDNA enters through RuvA and exits via RuvB. An RuvB hexamer assembles on each DNA strand where it exits the tetramer. Each RuvB hexamer is contacted by two RuvA subunits (via domain III) on 2 adjacent RuvB subunits; this complex drives branch migration. In the full resolvosome a probable DNA-RuvA(4)-RuvB(12)-RuvC(2) complex forms which resolves the HJ.

It localises to the cytoplasm. Functionally, the RuvA-RuvB-RuvC complex processes Holliday junction (HJ) DNA during genetic recombination and DNA repair, while the RuvA-RuvB complex plays an important role in the rescue of blocked DNA replication forks via replication fork reversal (RFR). RuvA specifically binds to HJ cruciform DNA, conferring on it an open structure. The RuvB hexamer acts as an ATP-dependent pump, pulling dsDNA into and through the RuvAB complex. HJ branch migration allows RuvC to scan DNA until it finds its consensus sequence, where it cleaves and resolves the cruciform DNA. This Methylobacillus flagellatus (strain ATCC 51484 / DSM 6875 / VKM B-1610 / KT) protein is Holliday junction branch migration complex subunit RuvA.